A 415-amino-acid polypeptide reads, in one-letter code: Corticotropin-releasing factor receptor 1 (415 aa).

Positions 1 to 23 (MARHPQLRLVKALLLLGLNPVSA) are cleaved as a signal peptide. Over 24–111 (SLQDQHCESL…CQEILNEEKK (88 aa)) the chain is Extracellular. Intrachain disulfides connect C30/C54, C44/C87, and C68/C102. N-linked (GlcNAc...) asparagine glycans are attached at residues N38, N78, and N98. The segment at 99–108 (YSECQEILNE) is important for peptide agonist binding. A helical transmembrane segment spans residues 112–142 (SKVHYHVAVIINYLGHCISLVALLVAFVLFL). Over 143–149 (RLRSIRC) the chain is Cytoplasmic. Residues 150-174 (LRNIIHWNLISAFILRNATWFVVQL) form a helical membrane-spanning segment. The Extracellular portion of the chain corresponds to 175 to 189 (TMSPEVHQSNVGWCR). A disulfide bond links C188 and C258. A helical membrane pass occupies residues 190-218 (LVTAAYNYFHVTNFFWMFGEGCYLHTAIV). Residues 219-225 (LTYSTDR) lie on the Cytoplasmic side of the membrane. A helical transmembrane segment spans residues 226 to 253 (LRKWMFICIGWGVPFPIIVAWAIGKLYY). Residues 254-269 (DNEKCWFGKRPGVYTD) are Extracellular-facing. Residues 270–295 (YIYQGPMILVLLINFIFLFNIVRILM) form a helical membrane-spanning segment. An important for antagonist binding region spans residues 280–290 (LLINFIFLFNI). Residues 296–306 (TKLRASTTSET) are Cytoplasmic-facing. A Phosphoserine; by PKA modification is found at S301. The helical transmembrane segment at 307–331 (IQYRKAVKATLVLLPLLGITYMLFF) threads the bilayer. Over 332-338 (VNPGEDE) the chain is Extracellular. Residues 339 to 368 (VSRVVFIYFNSFLESFQGFFVSVFYCFLNS) traverse the membrane as a helical segment. The Cytoplasmic segment spans residues 369–415 (EVRSAIRKRWHRWQDKHSIRARVARAMSIPTSPTRVSFHSIKQSTAV).

Belongs to the G-protein coupled receptor 2 family. As to quaternary structure, heterodimer; heterodimerizes with GPER1. Interacts (via N-terminal extracellular domain) with CRH and UCN. Interacts with DLG1; this inhibits endocytosis of CRHR1 after agonist binding. In terms of processing, C-terminal Ser or Thr residues may be phosphorylated. Post-translationally, phosphorylation at Ser-301 by PKA prevents maximal coupling to Gq-protein, and thereby negatively regulates downstream signaling. As to expression, expressed abundantly in the pituitary, cerebral cortex, hippocampus, amygdala and cerebellum.

It localises to the cell membrane. The protein resides in the endosome. Its function is as follows. G-protein coupled receptor for CRH (corticotropin-releasing factor) and UCN (urocortin). Has high affinity for CRH and UCN. Ligand binding causes a conformation change that triggers signaling via guanine nucleotide-binding proteins (G proteins) and down-stream effectors, such as adenylate cyclase. Promotes the activation of adenylate cyclase, leading to increased intracellular cAMP levels. Inhibits the activity of the calcium channel CACNA1H. Required for normal embryonic development of the adrenal gland and for normal hormonal responses to stress. Plays a role in the response to anxiogenic stimuli. The chain is Corticotropin-releasing factor receptor 1 (CRHR1) from Macaca mulatta (Rhesus macaque).